The chain runs to 158 residues: 2-C-methyl-D-erythritol 2,4-cyclodiphosphate synthase (158 aa).

A divalent metal cation-binding residues include aspartate 9 and histidine 11. 4-CDP-2-C-methyl-D-erythritol 2-phosphate-binding positions include 9–11 (DVH) and 35–36 (HS). Residue histidine 43 participates in a divalent metal cation binding. Residues 57–59 (DIG), 62–66 (FPDTD), 101–107 (AQKPKMA), 133–136 (TTTE), phenylalanine 140, and arginine 143 contribute to the 4-CDP-2-C-methyl-D-erythritol 2-phosphate site.

This sequence belongs to the IspF family. In terms of assembly, homotrimer. A divalent metal cation is required as a cofactor.

The catalysed reaction is 4-CDP-2-C-methyl-D-erythritol 2-phosphate = 2-C-methyl-D-erythritol 2,4-cyclic diphosphate + CMP. Its pathway is isoprenoid biosynthesis; isopentenyl diphosphate biosynthesis via DXP pathway; isopentenyl diphosphate from 1-deoxy-D-xylulose 5-phosphate: step 4/6. Its function is as follows. Involved in the biosynthesis of isopentenyl diphosphate (IPP) and dimethylallyl diphosphate (DMAPP), two major building blocks of isoprenoid compounds. Catalyzes the conversion of 4-diphosphocytidyl-2-C-methyl-D-erythritol 2-phosphate (CDP-ME2P) to 2-C-methyl-D-erythritol 2,4-cyclodiphosphate (ME-CPP) with a corresponding release of cytidine 5-monophosphate (CMP). The sequence is that of 2-C-methyl-D-erythritol 2,4-cyclodiphosphate synthase from Bacillus thuringiensis subsp. konkukian (strain 97-27).